We begin with the raw amino-acid sequence, 196 residues long: ATP-dependent Clp protease proteolytic subunit (196 aa).

Ser-96 functions as the Nucleophile in the catalytic mechanism. His-121 is a catalytic residue.

The protein belongs to the peptidase S14 family. In terms of assembly, fourteen ClpP subunits assemble into 2 heptameric rings which stack back to back to give a disk-like structure with a central cavity, resembling the structure of eukaryotic proteasomes.

The protein localises to the cytoplasm. It carries out the reaction Hydrolysis of proteins to small peptides in the presence of ATP and magnesium. alpha-casein is the usual test substrate. In the absence of ATP, only oligopeptides shorter than five residues are hydrolyzed (such as succinyl-Leu-Tyr-|-NHMec, and Leu-Tyr-Leu-|-Tyr-Trp, in which cleavage of the -Tyr-|-Leu- and -Tyr-|-Trp bonds also occurs).. Functionally, cleaves peptides in various proteins in a process that requires ATP hydrolysis. Has a chymotrypsin-like activity. Plays a major role in the degradation of misfolded proteins. This Streptococcus pneumoniae (strain 70585) protein is ATP-dependent Clp protease proteolytic subunit.